The following is a 576-amino-acid chain: Pentatricopeptide repeat-containing protein At1g79080, chloroplastic (576 aa).

The transit peptide at 1–37 (MSTLLNSVLSMASPESSPRKAVGFVSHIPSGFLHFSS) directs the protein to the chloroplast. 13 PPR repeats span residues 105–139 (NVAH…GIIP), 140–174 (DASA…GYPS), 175–209 (NTVT…GLAP), 210–244 (NAFT…GGEP), 245–279 (NLVS…GFKA), 280–314 (NVVS…DRAP), 315–349 (SVVT…NHQF), 352–386 (TATS…RCKP), 387–417 (NEGT…LSNK), 422–456 (THDF…GFDP), 457–487 (DAHT…MEES), 493–527 (TVDN…KRMP), and 528–562 (NETT…KVIG).

This sequence belongs to the PPR family. P subfamily.

It is found in the plastid. The protein localises to the chloroplast. In Arabidopsis thaliana (Mouse-ear cress), this protein is Pentatricopeptide repeat-containing protein At1g79080, chloroplastic.